Reading from the N-terminus, the 151-residue chain is Small ribosomal subunit protein uS15 (151 aa).

It belongs to the universal ribosomal protein uS15 family.

The sequence is that of Small ribosomal subunit protein uS15 (RpS13) from Plutella xylostella (Diamondback moth).